A 296-amino-acid chain; its full sequence is Hca operon transcriptional activator HcaR (296 aa).

The 58-residue stretch at 1 to 58 (MELRHLRYFVAVAQALNFTRAAEKLHTSQPSLSSQIRDLENCVGVPLLVRDKRKVALT) folds into the HTH lysR-type domain. A DNA-binding region (H-T-H motif) is located at residues 18-38 (FTRAAEKLHTSQPSLSSQIRD).

This sequence belongs to the LysR transcriptional regulatory family.

Transcriptional activator of the hca operon for 3-phenylpropionic acid catabolism. The sequence is that of Hca operon transcriptional activator HcaR (hcaR) from Escherichia coli (strain K12).